The sequence spans 159 residues: Phosphopantetheine adenylyltransferase (159 aa).

Thr10 contacts substrate. ATP-binding positions include Thr10–Phe11 and His18. 3 residues coordinate substrate: Lys42, Met74, and Arg88. Residues Gly89–Arg91, Glu99, and Trp124–Ser130 contribute to the ATP site.

This sequence belongs to the bacterial CoaD family. As to quaternary structure, homohexamer. The cofactor is Mg(2+).

It localises to the cytoplasm. The enzyme catalyses (R)-4'-phosphopantetheine + ATP + H(+) = 3'-dephospho-CoA + diphosphate. It participates in cofactor biosynthesis; coenzyme A biosynthesis; CoA from (R)-pantothenate: step 4/5. Its function is as follows. Reversibly transfers an adenylyl group from ATP to 4'-phosphopantetheine, yielding dephospho-CoA (dPCoA) and pyrophosphate. This chain is Phosphopantetheine adenylyltransferase, found in Salmonella agona (strain SL483).